Here is a 544-residue protein sequence, read N- to C-terminus: Lariat debranching enzyme (544 aa).

A divalent metal cation contacts are provided by Cys8, His10, Asp39, and Asn84. A lariat recognition loop region spans residues 124 to 154 (SGIFKSHDYRKGHFECPPYNSSTIRSIYHVR). The residue at position 128 (Lys128) is an N6-acetyllysine. His174, His226, and His228 together coordinate a divalent metal cation. Over residues 395–412 (EYEEQDDVESNDSGEDQS) the composition is skewed to acidic residues. Residues 395 to 463 (EYEEQDDVES…PSDQASEFSA (69 aa)) form a disordered region. The span at 413–425 (EYNTDTSALSSIN) shows a compositional bias: polar residues. Residues 429 to 439 (IMLDEEEDEDS) are compositionally biased toward acidic residues. Residues 445–463 (SGMNTPSVEPSDQASEFSA) show a composition bias toward polar residues. A phosphoserine mark is found at Ser464, Ser474, Ser478, Ser479, Ser485, Ser499, and Ser514. The tract at residues 476 to 544 (IVSSDDTVDS…AVDDDDDDAA (69 aa)) is disordered. The span at 512-522 (RLSDEHEPEQR) shows a compositional bias: basic and acidic residues.

The protein belongs to the lariat debranching enzyme family. Fe(2+) is required as a cofactor. Requires Zn(2+) as cofactor. Mn(2+) serves as cofactor. Ubiquitously expressed, strongest expression in the spinal cord and brainstem.

It localises to the nucleus. Active in presence of diverse metals including Fe(2+), Zn(2+), Mn(2+). Also activated by Ca(2+). Binds two metal cations in two adjacent alpha and beta metal-binding pockets. In terms of biological role, cleaves the 2'-5' phosphodiester linkage at the branch point of excised lariat intron RNA and converts them into linear molecules that can be subsequently degraded, thereby facilitating ribonucleotide turnover. Linked to its role in pre-mRNA processing mechanism, may also participate in retrovirus replication via an RNA lariat intermediate in cDNA synthesis and have an antiviral cell-intrinsic defense function in the brainstem. The chain is Lariat debranching enzyme (DBR1) from Homo sapiens (Human).